Reading from the N-terminus, the 626-residue chain is Solute carrier family 13 member 4 (626 aa).

4 helical membrane passes run 13–33, 52–72, 77–97, and 113–133; these read LLLVVCVPLLLLPLPVLHPSS, AVPLGAAALVPAFLYPFFGVL, VAAEYFKNTTLLLVGVICVAA, and VLMAGAKPGMLLLCFMCCTTL. A compositionally biased stretch (polar residues) spans 217-228; sequence SITNPIKTANQH. The interval 217–252 is disordered; the sequence is SITNPIKTANQHQGKKQHPSQEKPQVLTPSPRKQKL. 8 helical membrane passes run 274–294, 309–329, 372–392, 414–434, 466–486, 499–519, 543–563, and 590–610; these read YSATIGGLTTIIGTSTSLIFL, FGTWFLFSFPISLIMLVVSWF, ISYPEMVTGFFFILMTVLWFT, ATVSVFLGFLLFLIPAKKPCF, IVILVGGGYALASGSKSSGLS, LPPWAVTLLACILVSIVTEFV, PLYTLIPVTMCISFAVMLPVG, and VIGLVIVMVAINTWGVSLFHL.

This sequence belongs to the SLC13A/DASS transporter (TC 2.A.47) family. NADC subfamily. Highly expressed in placenta and testis with intermediate levels in brain and lower levels in heart, thymus and liver.

Its subcellular location is the membrane. It catalyses the reaction sulfate(out) + 3 Na(+)(out) = sulfate(in) + 3 Na(+)(in). With respect to regulation, transport is inhibited by thiosulfate, phosphate, molybdate, selenate and tungstate. Not inhibited by oxalate, citrate, succinate, phenol red or 4,4'-diisothiocyanostilbene-2,2'-disulfonic acid (DIDS). In terms of biological role, sodium:sulfate symporter that mediates sulfate reabsorption in the high endothelial venules (HEV). The protein is Solute carrier family 13 member 4 (SLC13A4) of Homo sapiens (Human).